The primary structure comprises 453 residues: Chromosomal replication initiator protein DnaA (453 aa).

Residues 1–73 (MNISPQYLWN…AQEVASVVGY (73 aa)) form a domain I, interacts with DnaA modulators region. Positions 73-112 (YPVDIQLTTAEGETMAMTGEAQSYQEKSLTQIAPESPKLN) are domain II. Residues 113–329 (QLNPRYTFSR…GALIRAIAYT (217 aa)) form a domain III, AAA+ region region. Glycine 157, glycine 159, lysine 160, and threonine 161 together coordinate ATP. Residues 330–453 (SISGLSMTVQ…RINMASRTQS (124 aa)) form a domain IV, binds dsDNA region.

Belongs to the DnaA family. In terms of assembly, oligomerizes as a right-handed, spiral filament on DNA at oriC.

The protein localises to the cytoplasm. Functionally, plays an essential role in the initiation and regulation of chromosomal replication. ATP-DnaA binds to the origin of replication (oriC) to initiate formation of the DNA replication initiation complex once per cell cycle. Binds the DnaA box (a 9 base pair repeat at the origin) and separates the double-stranded (ds)DNA. Forms a right-handed helical filament on oriC DNA; dsDNA binds to the exterior of the filament while single-stranded (ss)DNA is stabiized in the filament's interior. The ATP-DnaA-oriC complex binds and stabilizes one strand of the AT-rich DNA unwinding element (DUE), permitting loading of DNA polymerase. After initiation quickly degrades to an ADP-DnaA complex that is not apt for DNA replication. Binds acidic phospholipids. The polypeptide is Chromosomal replication initiator protein DnaA (Rippkaea orientalis (strain PCC 8801 / RF-1) (Cyanothece sp. (strain PCC 8801))).